The primary structure comprises 241 residues: Probable transcriptional regulatory protein azo0574 (241 aa).

A disordered region spans residues 1-21 (MAGHSKWANIQHRKGRQDAKR).

Belongs to the TACO1 family.

It is found in the cytoplasm. This chain is Probable transcriptional regulatory protein azo0574, found in Azoarcus sp. (strain BH72).